A 471-amino-acid chain; its full sequence is Mitochondrial distribution and morphology protein 10 (471 aa).

Disordered stretches follow at residues 272 to 291 (TEMP…SNHG), 374 to 394 (ADTP…DEEN), and 436 to 455 (SWAA…GGVS). Over residues 276 to 288 (SSSSSTSSTTTTS) the composition is skewed to low complexity. The span at 444–455 (AGGGQSVGGGVS) shows a compositional bias: gly residues.

This sequence belongs to the MDM10 family. Component of the ER-mitochondria encounter structure (ERMES) or MDM complex, composed of mmm1, mdm10, mdm12 and mdm34. Associates with the mitochondrial outer membrane sorting assembly machinery SAM(core) complex.

The protein resides in the mitochondrion outer membrane. Component of the ERMES/MDM complex, which serves as a molecular tether to connect the endoplasmic reticulum and mitochondria. Components of this complex are involved in the control of mitochondrial shape and protein biogenesis and may function in phospholipid exchange. mdm10 is involved in the late assembly steps of the general translocase of the mitochondrial outer membrane (TOM complex). Functions in the tom40-specific route of the assembly of outer membrane beta-barrel proteins, including the association of tom40 with the receptor tom22 and small TOM proteins. Can associate with the SAM(core) complex as well as the mdm12-mmm1 complex, both involved in late steps of the major beta-barrel assembly pathway, that is responsible for biogenesis of all outer membrane beta-barrel proteins. May act as a switch that shuttles between both complexes and channels precursor proteins into the tom40-specific pathway. Plays a role in mitochondrial morphology and in the inheritance of mitochondria. This chain is Mitochondrial distribution and morphology protein 10 (mdmB), found in Neosartorya fischeri (strain ATCC 1020 / DSM 3700 / CBS 544.65 / FGSC A1164 / JCM 1740 / NRRL 181 / WB 181) (Aspergillus fischerianus).